Reading from the N-terminus, the 151-residue chain is Large ribosomal subunit protein bL9 (151 aa).

Belongs to the bacterial ribosomal protein bL9 family.

Its function is as follows. Binds to the 23S rRNA. The sequence is that of Large ribosomal subunit protein bL9 from Mycolicibacterium smegmatis (strain ATCC 700084 / mc(2)155) (Mycobacterium smegmatis).